The chain runs to 177 residues: 3-hydroxydecanoyl-[acyl-carrier-protein] dehydratase (177 aa).

The active site involves H76.

This sequence belongs to the thioester dehydratase family. FabA subfamily. In terms of assembly, homodimer.

It is found in the cytoplasm. The enzyme catalyses a (3R)-hydroxyacyl-[ACP] = a (2E)-enoyl-[ACP] + H2O. The catalysed reaction is (3R)-hydroxydecanoyl-[ACP] = (2E)-decenoyl-[ACP] + H2O. It catalyses the reaction (2E)-decenoyl-[ACP] = (3Z)-decenoyl-[ACP]. It participates in lipid metabolism; fatty acid biosynthesis. In terms of biological role, necessary for the introduction of cis unsaturation into fatty acids. Catalyzes the dehydration of (3R)-3-hydroxydecanoyl-ACP to E-(2)-decenoyl-ACP and then its isomerization to Z-(3)-decenoyl-ACP. Can catalyze the dehydratase reaction for beta-hydroxyacyl-ACPs with saturated chain lengths up to 16:0, being most active on intermediate chain length. The polypeptide is 3-hydroxydecanoyl-[acyl-carrier-protein] dehydratase (Mannheimia succiniciproducens (strain KCTC 0769BP / MBEL55E)).